Here is a 336-residue protein sequence, read N- to C-terminus: tRNA-cytidine(32) 2-sulfurtransferase (336 aa).

A compositionally biased stretch (low complexity) spans T11–P23. The tract at residues T11–P31 is disordered. The PP-loop motif signature appears at S75–S80. Residues C150, C153, and C241 each contribute to the [4Fe-4S] cluster site.

This sequence belongs to the TtcA family. Homodimer. The cofactor is Mg(2+). [4Fe-4S] cluster is required as a cofactor.

It is found in the cytoplasm. It catalyses the reaction cytidine(32) in tRNA + S-sulfanyl-L-cysteinyl-[cysteine desulfurase] + AH2 + ATP = 2-thiocytidine(32) in tRNA + L-cysteinyl-[cysteine desulfurase] + A + AMP + diphosphate + H(+). It participates in tRNA modification. Functionally, catalyzes the ATP-dependent 2-thiolation of cytidine in position 32 of tRNA, to form 2-thiocytidine (s(2)C32). The sulfur atoms are provided by the cysteine/cysteine desulfurase (IscS) system. The protein is tRNA-cytidine(32) 2-sulfurtransferase of Paraburkholderia xenovorans (strain LB400).